The following is a 318-amino-acid chain: Probable endolytic peptidoglycan transglycosylase RlpA (318 aa).

An N-terminal signal peptide occupies residues Met-1–Ala-21. Residues Asp-121–Ala-191 are disordered. The span at His-125–Pro-137 shows a compositional bias: polar residues.

The protein belongs to the RlpA family.

Lytic transglycosylase with a strong preference for naked glycan strands that lack stem peptides. This Treponema pallidum (strain Nichols) protein is Probable endolytic peptidoglycan transglycosylase RlpA.